The primary structure comprises 35 residues: Photosystem II reaction center protein T (35 aa).

The helical transmembrane segment at 3–23 (ALVYTFLLVSTLGIIFFAIFF) threads the bilayer.

The protein belongs to the PsbT family. PSII is composed of 1 copy each of membrane proteins PsbA, PsbB, PsbC, PsbD, PsbE, PsbF, PsbH, PsbI, PsbJ, PsbK, PsbL, PsbM, PsbT, PsbY, PsbZ, Psb30/Ycf12, at least 3 peripheral proteins of the oxygen-evolving complex and a large number of cofactors. It forms dimeric complexes.

The protein resides in the plastid. The protein localises to the chloroplast thylakoid membrane. Found at the monomer-monomer interface of the photosystem II (PS II) dimer, plays a role in assembly and dimerization of PSII. PSII is a light-driven water plastoquinone oxidoreductase, using light energy to abstract electrons from H(2)O, generating a proton gradient subsequently used for ATP formation. This chain is Photosystem II reaction center protein T, found in Stangeria eriopus (Natal grass cycad).